The chain runs to 186 residues: Large ribosomal subunit protein uL5 (186 aa).

The protein belongs to the universal ribosomal protein uL5 family. As to quaternary structure, part of the 50S ribosomal subunit; contacts the 5S rRNA and probably tRNA. Forms a bridge to the 30S subunit in the 70S ribosome.

Its function is as follows. This is one of the proteins that bind and probably mediate the attachment of the 5S RNA into the large ribosomal subunit, where it forms part of the central protuberance. In the 70S ribosome it contacts protein S13 of the 30S subunit (bridge B1b), connecting the 2 subunits; this bridge is implicated in subunit movement. May contact the P site tRNA; the 5S rRNA and some of its associated proteins might help stabilize positioning of ribosome-bound tRNAs. In Pyrococcus furiosus (strain ATCC 43587 / DSM 3638 / JCM 8422 / Vc1), this protein is Large ribosomal subunit protein uL5.